The following is a 147-amino-acid chain: Hemoglobin subunit epsilon (147 aa).

Residues 3 to 147 enclose the Globin domain; sequence HFTAEEKTAI…VASALAHKYH (145 aa). Ser14 and Ser51 each carry phosphoserine. 2 residues coordinate heme b: His64 and His93.

This sequence belongs to the globin family. As to expression, red blood cells.

Functionally, hemoglobin epsilon chain is an embryonic-type beta-type chain found in prenatal and neonatal marsupials. This is Hemoglobin subunit epsilon (HBE1) from Notamacropus eugenii (Tammar wallaby).